A 440-amino-acid chain; its full sequence is Ferreportin (440 aa).

The Cytoplasmic segment spans residues 1–8 (MKVQSLLR). Residues 9–38 (IETQLLLGRLLTRSGDQAWDFVVPFALLVI) form a helical membrane-spanning segment. Aspartate 24 contributes to the Ca(2+) binding site. At 39 to 42 (FPGK) the chain is on the extracellular side. The helical transmembrane segment at 43–69 (LQVAAFYYLIVKIGTFLLTPSSGKWID) threads the bilayer. Residues 70-72 (THP) are Cytoplasmic-facing. The helical transmembrane segment at 73–103 (RIQVVKWGVWLQFFAILAGMVFFGMLDGLVR) threads the bilayer. Glutamine 84 contributes to the Ca(2+) binding site. Topologically, residues 104-109 (AGGRES) are extracellular. A helical membrane pass occupies residues 110 to 145 (WLLSVLFIALALSGVMASLGSQITDISVGNDLAPSL). The Cytoplasmic portion of the chain corresponds to 146–147 (VA). Residues 148–176 (PEKLTHFNSWLRRIDLATEVGAPILAGAL) traverse the membrane as a helical segment. At 177-186 (FAFHPEQLPL) the chain is on the extracellular side. A helical transmembrane segment spans residues 187–213 (AGLFLIGLWNLVSFVPEYFLLRNVIQR). Asparagine 196 and glutamate 203 together coordinate Ca(2+). Over 214-242 (SGLKIKVLTEAQSWKDTFHINLRGSFSDP) the chain is Cytoplasmic. A helical membrane pass occupies residues 243–271 (IFWLILSYALLWLSVLSPHGVLLAAYLKD). The Extracellular segment spans residues 272–276 (EMRLP). A helical transmembrane segment spans residues 277-304 (ETEIGLFRGLGAVFGLISTVSFPYLVRR). The Cytoplasmic portion of the chain corresponds to 305-306 (LG). The chain crosses the membrane as a helical span at residues 307–329 (LISSSRWHLGFQGVTLGIAVTAF). The Extracellular portion of the chain corresponds to 330-335 (AMGSTA). The chain crosses the membrane as a helical span at residues 336 to 365 (SVYVFLGCILLSRVGLYGFSNGEFELRQRL). The Cytoplasmic segment spans residues 366 to 370 (IPEGR). The helical transmembrane segment at 371–395 (RGELNSLSSLTTTSATLILFSAGSL) threads the bilayer. Residues 396–398 (LPQ) lie on the Extracellular side of the membrane. The chain crosses the membrane as a helical span at residues 399 to 424 (TEDFKYLVYVSLAAVLLANVVFIKWS). The Cytoplasmic portion of the chain corresponds to 425–440 (SRQGVVTSGAAEPVES).

Belongs to the ferroportin (FP) (TC 2.A.100) family. Ca(2+) serves as cofactor.

The protein localises to the cell membrane. In terms of biological role, iron transpoter that exports Fe(2+) from the cell. Also binds to Co(2+) and Ni(2+). May act as a multivalent divalent metal transporter. The transporter is composed of 12 transmembrane (TM) helices organized into N-terminal (TM1-6) and C-terminal (TM7-12) domains. The substrate-binding site is formed at the interface of the two domains and is alternately accessible from either side of the membrane. The transport cycle is viewed as a series of ligand-induced conformational changes that include open outward and open inward states. The polypeptide is Ferreportin (slc39) (Bdellovibrio bacteriovorus (strain ATCC 15356 / DSM 50701 / NCIMB 9529 / HD100)).